The chain runs to 136 residues: Acyl carrier protein 2, chloroplastic (136 aa).

The transit peptide at 1–51 (MASIAASASISLQARPRQLAIAASQVKSFSNGRRSSLSFNLRQLPTRLTVS) directs the protein to the chloroplast. The region spanning 56–131 (PETVDKVCAV…QAAALIEELL (76 aa)) is the Carrier domain. At S91 the chain carries O-(pantetheine 4'-phosphoryl)serine.

It belongs to the acyl carrier protein (ACP) family. Post-translationally, 4'-phosphopantetheine is transferred from CoA to a specific serine of apo-ACP by acpS. This modification is essential for activity because fatty acids are bound in thioester linkage to the sulfhydryl of the prosthetic group.

Its subcellular location is the plastid. It localises to the chloroplast. Functionally, carrier of the growing fatty acid chain in fatty acid biosynthesis. In Arabidopsis thaliana (Mouse-ear cress), this protein is Acyl carrier protein 2, chloroplastic (ACP2).